A 228-amino-acid polypeptide reads, in one-letter code: Putative adhesin RBE_1271 (228 aa).

A signal peptide spans methionine 1–alanine 22.

The sequence is that of Putative adhesin RBE_1271 from Rickettsia bellii (strain RML369-C).